The sequence spans 343 residues: Melanoma-associated antigen B18 (343 aa).

A compositionally biased stretch (basic residues) spans 1–17 (MPRGQKSKLRAREKRHQ). Positions 1 to 102 (MPRGQKSKLR…LGSSREAEGW (102 aa)) are disordered. Residues 67 to 87 (APSTTNAIAPVSCSSNEGASS) are compositionally biased toward polar residues. The segment covering 88–102 (QDEKSLGSSREAEGW) has biased composition (basic and acidic residues). The segment at 100-343 (EGWKEDPLNK…TTSSSFSHAK (244 aa)) is interaction with LNX1. Residues 107–306 (LNKKVVSLVH…SAFPSCYEEA (200 aa)) form the MAGE domain. The interval 313 to 343 (RTQARAAARAHTAAMANARSRTTSSSFSHAK) is disordered. Low complexity predominate over residues 316-333 (ARAAARAHTAAMANARSR). Residues 334–343 (TTSSSFSHAK) are compositionally biased toward polar residues.

In terms of assembly, interacts with LNX1.

It localises to the cytoplasm. Its function is as follows. May enhance ubiquitin ligase activity of RING-type zinc finger-containing E3 ubiquitin-protein ligases. Proposed to act through recruitment and/or stabilization of the Ubl-conjugating enzyme (E2) at the E3:substrate complex. The sequence is that of Melanoma-associated antigen B18 (MAGEB18) from Homo sapiens (Human).